The chain runs to 505 residues: Aminoaldehyde dehydrogenase 2 (505 aa).

Na(+)-binding residues include isoleucine 31 and aspartate 99. NAD(+) is bound by residues 159-161 and 185-188; these read TPW and KPSE. Leucine 189 is a Na(+) binding site. 238-242 serves as a coordination point for NAD(+); that stretch reads GSGPT. The active-site Proton acceptor is glutamate 260. Leucine 261 contributes to the NAD(+) binding site. The active-site Nucleophile is cysteine 295. NAD(+)-binding residues include glutamate 394 and tryptophan 460.

The protein belongs to the aldehyde dehydrogenase family. Forms homodimers.

It carries out the reaction 4-aminobutanal + NAD(+) + H2O = 4-aminobutanoate + NADH + 2 H(+). The catalysed reaction is 3-aminopropanal + NAD(+) + H2O = beta-alanine + NADH + 2 H(+). The enzyme catalyses 4-(trimethylamino)butanal + NAD(+) + H2O = 4-(trimethylamino)butanoate + NADH + 2 H(+). It catalyses the reaction 4-guanidinobutanal + NAD(+) + H2O = 4-guanidinobutanoate + NADH + 2 H(+). Its pathway is amine and polyamine biosynthesis; betaine biosynthesis via choline pathway; betaine from betaine aldehyde: step 1/1. Functionally, dehydrogenase that catalyzes the oxidation of several aminoaldehydes. Metabolizes and detoxifies aldehyde products of polyamine degradation to non-toxic amino acids. Catalyzes the oxidation of 4-aminobutanal and 3-aminopropanal to 4-aminobutanoate and beta-alanine, respectively. Catalyzes the oxidation of 4-(trimethylamino)butanal and 4-guanidinobutanal to 4-trimethylammoniobutanoate and 4-guanidinobutanoate, respectively. The chain is Aminoaldehyde dehydrogenase 2 from Solanum lycopersicum (Tomato).